The sequence spans 135 residues: Retinol-binding protein 1 (135 aa).

The tract at residues 22–32 (RALDVNVALRK) is important for interaction with STRA6. Lys41, Met63, and Gln109 together coordinate all-trans-retinol.

Belongs to the calycin superfamily. Fatty-acid binding protein (FABP) family. In terms of assembly, interacts (only as retinol-free apoprotein) with STRA6.

The protein resides in the cytoplasm. Its subcellular location is the lipid droplet. In terms of biological role, cytoplasmic retinol-binding protein. Accepts retinol from the transport protein STRA6, and thereby contributes to retinol uptake, storage and retinoid homeostasis. The protein is Retinol-binding protein 1 (Rbp1) of Rattus norvegicus (Rat).